Here is a 209-residue protein sequence, read N- to C-terminus: tRNA (guanine-N(7)-)-methyltransferase (209 aa).

Residues D35, E60, N87, and D113 each contribute to the S-adenosyl-L-methionine site. Residue D113 is part of the active site. Substrate contacts are provided by K117 and D149.

The protein belongs to the class I-like SAM-binding methyltransferase superfamily. TrmB family.

The catalysed reaction is guanosine(46) in tRNA + S-adenosyl-L-methionine = N(7)-methylguanosine(46) in tRNA + S-adenosyl-L-homocysteine. The protein operates within tRNA modification; N(7)-methylguanine-tRNA biosynthesis. Functionally, catalyzes the formation of N(7)-methylguanine at position 46 (m7G46) in tRNA. The polypeptide is tRNA (guanine-N(7)-)-methyltransferase (Prochlorococcus marinus (strain AS9601)).